Here is a 78-residue protein sequence, read N- to C-terminus: UPF0291 protein SE_1024 (78 aa).

Residues 53–78 form a disordered region; the sequence is TKVIDPEGNDVTPEKLKKIQEEKHNK. Residues 64 to 78 are compositionally biased toward basic and acidic residues; it reads TPEKLKKIQEEKHNK.

Belongs to the UPF0291 family.

The protein localises to the cytoplasm. This Staphylococcus epidermidis (strain ATCC 12228 / FDA PCI 1200) protein is UPF0291 protein SE_1024.